Reading from the N-terminus, the 381-residue chain is ELMO domain-containing protein 3 (381 aa).

The tract at residues 1–31 is disordered; sequence MNEKSCSFHSKEELRDGQGERLSAGYSPSYD. Residues 9 to 19 show a composition bias toward basic and acidic residues; it reads HSKEELRDGQG. The ELMO domain occupies 170–324; that stretch reads VHGRVLQTIY…ELEVLAKKSP (155 aa).

In terms of tissue distribution, both isoform 1 and isoform 6 are widely expressed.

The protein localises to the cell projection. The protein resides in the stereocilium. It is found in the kinocilium. It localises to the cytoplasm. Its subcellular location is the cytoskeleton. In terms of biological role, acts as a GTPase-activating protein (GAP) for ARL2 with low specific activity. This is ELMO domain-containing protein 3 (ELMOD3) from Homo sapiens (Human).